The primary structure comprises 229 residues: Heptaprenylglyceryl phosphate synthase (229 aa).

Lysine 12 is a binding site for sn-glycerol 1-phosphate. Mg(2+) contacts are provided by aspartate 14 and serine 40. Sn-glycerol 1-phosphate contacts are provided by residues tyrosine 159 to glycine 164, glycine 189, and glycine 209 to asparagine 210.

The protein belongs to the GGGP/HepGP synthase family. Group I subfamily. Homodimer. Requires Mg(2+) as cofactor.

The enzyme catalyses sn-glycerol 1-phosphate + all-trans-heptaprenyl diphosphate = 3-heptaprenyl-sn-glycero-1-phosphate + diphosphate. It functions in the pathway membrane lipid metabolism; glycerophospholipid metabolism. Its function is as follows. Prenyltransferase that catalyzes in vivo the transfer of the heptaprenyl moiety of heptaprenyl pyrophosphate (HepPP; 35 carbon atoms) to the C3 hydroxyl of sn-glycerol-1-phosphate (G1P), producing heptaprenylglyceryl phosphate (HepGP). This reaction is an ether-bond-formation step in the biosynthesis of archaea-type G1P-based membrane lipids found in Bacillales. This chain is Heptaprenylglyceryl phosphate synthase, found in Bacillus cereus (strain ZK / E33L).